We begin with the raw amino-acid sequence, 485 residues long: Sodium-coupled neutral amino acid symporter 1 (485 aa).

Over 1-74 (MMHFKSGLEL…EYIPGTTSLG (74 aa)) the chain is Cytoplasmic. Position 6 is a phosphoserine (Ser6). At Thr11 the chain carries Phosphothreonine. A phosphoserine mark is found at Ser25, Ser28, Ser49, and Ser52. A Phosphothreonine modification is found at Thr54. Residue Ser56 is modified to Phosphoserine. The helical transmembrane segment at 75–97 (MSVFNLSNAIMGSGILGLAFALA) threads the bilayer. The Extracellular segment spans residues 98–112 (NTGILLFLILLTSVT). A helical transmembrane segment spans residues 113 to 133 (LLSIYSINLLLICSKETGCMV). Residues 134–148 (YEKLGEQVFGTTGKL) are Cytoplasmic-facing. The helical transmembrane segment at 149-169 (VIFGATSLQNTGAMLSYLFIV) threads the bilayer. Over 170 to 188 (KNELPSAIKSLMGEEDAFS) the chain is Extracellular. The chain crosses the membrane as a helical span at residues 189 to 211 (AWYVDGRVLVVMVTFGIILPLCL). At 212 to 216 (LKNLG) the chain is on the cytoplasmic side. A helical membrane pass occupies residues 217–237 (YLGYTSGFSLSCMMFFLIVVI). Topologically, residues 238-273 (YKKFQTPCMSVEQNSTVSANVTDACTPKYVTFNSKT) are extracellular. Cys245 and Cys262 are disulfide-bonded. Residues Asn251 and Asn257 are each glycosylated (N-linked (GlcNAc...) asparagine). Residues 274–294 (VYALPTIAFAFVCHPSVLPIY) form a helical membrane-spanning segment. Topologically, residues 295–310 (SELKDRSQKKMQMVSN) are cytoplasmic. Residues 311 to 331 (ISFFAMFVMYFLTAIFGYLTF) traverse the membrane as a helical segment. The Extracellular portion of the chain corresponds to 332–348 (YEKVQSDLLHKYQSTGD). The chain crosses the membrane as a helical span at residues 349–369 (ILILTVRLAVIVAVILTVPVL). The Cytoplasmic portion of the chain corresponds to 370 to 391 (FFTVRSSLFELAKKTKFHLCRH). The chain crosses the membrane as a helical span at residues 392 to 412 (VLVTIILLIIINLLVIFIPSM). Residues 413-414 (KD) are Extracellular-facing. Residues 415 to 435 (IFGVVGVTSANMLIFILPSSL) traverse the membrane as a helical segment. Residues 436-450 (YLKITNQDGDKGTQR) are Cytoplasmic-facing. Residues 451–471 (IWAALFLGLGVLFSLISIPLV) traverse the membrane as a helical segment. Topologically, residues 472 to 485 (IYDWACSSGTDEGH) are extracellular.

This sequence belongs to the amino acid/polyamine transporter 2 family. In terms of processing, N-glycosylation plays an important role in the L-glutamine transport. As to expression, specifically expressed in brain and retina (at protein level). Also detected in spleen, small intestine and lung.

The protein localises to the cell membrane. It catalyses the reaction L-glutamine(in) + Na(+)(in) = L-glutamine(out) + Na(+)(out). It carries out the reaction L-alanine(in) + Na(+)(in) = L-alanine(out) + Na(+)(out). The catalysed reaction is L-histidine(in) + Na(+)(in) = L-histidine(out) + Na(+)(out). The enzyme catalyses L-asparagine(in) + Na(+)(in) = L-asparagine(out) + Na(+)(out). It catalyses the reaction L-serine(in) + Na(+)(in) = L-serine(out) + Na(+)(out). It carries out the reaction L-cysteine(in) + Na(+)(in) = L-cysteine(out) + Na(+)(out). The catalysed reaction is L-methionine(in) + Na(+)(in) = L-methionine(out) + Na(+)(out). The enzyme catalyses glycine(in) + Na(+)(in) = glycine(out) + Na(+)(out). It catalyses the reaction L-threonine(in) + Na(+)(in) = L-threonine(out) + Na(+)(out). It carries out the reaction L-proline(in) + Na(+)(in) = L-proline(out) + Na(+)(out). Inhibited by alpha-(methylamino)isobutyric acid (MeAIB). Inhibited by lithium, potassium, choline ions, N-methylglucamine. The pH dependence has an allosteric effect on the transport. Functionally, symporter that cotransports short-chain neutral amino acids and sodium ions from the extraccellular to the intracellular side of the cell membrane. The transport is elctrogenic, pH dependent and driven by the Na(+) electrochemical gradient. Participates in the astroglia-derived glutamine transport into GABAergic interneurons for neurotransmitter GABA de novo synthesis. May also contributes to amino acid transport in placental trophoblast. Regulates synaptic plasticity. The chain is Sodium-coupled neutral amino acid symporter 1 from Mus musculus (Mouse).